A 128-amino-acid chain; its full sequence is Cystatin-12 (128 aa).

A signal peptide spans 1-21 (MLWKSVLSVALIVLGIHDCSF). Intrachain disulfides connect Cys82–Cys92 and Cys105–Cys125. Asn122 carries N-linked (GlcNAc...) asparagine glycosylation.

The protein belongs to the cystatin family. In terms of tissue distribution, located at the very proximal caput epididymis (at protein level). Expressed in epididymis, Sertoli cells and testis. Also found to be weakly expressed in ovary and prostate.

The protein resides in the secreted. In terms of biological role, may play a specialized role in spermatogenesis. The protein is Cystatin-12 (Cst12) of Mus musculus (Mouse).